Reading from the N-terminus, the 97-residue chain is MEIKKTAMAGTLESSDVQIMLSQGRDGITFDLVSDVAKQFDDAIKATITAVLALYGVDNAEVKVVDKGALDMVIKARAMTAVQRALDLADEPNWEVM.

O-(phosphoribosyl dephospho-coenzyme A)serine is present on Ser14.

It belongs to the CitD family. In terms of assembly, oligomer with a subunit composition of (alpha,beta,gamma)6.

The protein resides in the cytoplasm. Covalent carrier of the coenzyme of citrate lyase. The chain is Citrate lyase acyl carrier protein from Leuconostoc citreum (strain KM20).